Reading from the N-terminus, the 436-residue chain is Trigger factor (436 aa).

Residues 161–248 (TDRVTIDLYG…LKKVEQYRLP (88 aa)) enclose the PPIase FKBP-type domain.

It belongs to the FKBP-type PPIase family. Tig subfamily.

Its subcellular location is the cytoplasm. It catalyses the reaction [protein]-peptidylproline (omega=180) = [protein]-peptidylproline (omega=0). Functionally, involved in protein export. Acts as a chaperone by maintaining the newly synthesized protein in an open conformation. Functions as a peptidyl-prolyl cis-trans isomerase. This is Trigger factor from Baumannia cicadellinicola subsp. Homalodisca coagulata.